Reading from the N-terminus, the 917-residue chain is Nitrate reductase [NADH] 1 (917 aa).

A disordered region spans residues 62-81 (DSYDDSSSDDEDESHNRNVP). Residues 63–74 (SYDDSSSDDEDE) are compositionally biased toward acidic residues. Residue cysteine 197 coordinates Mo-molybdopterin. Residues 545–620 (SKMYSISEVR…LEDYRIGELI (76 aa)) form the Cytochrome b5 heme-binding domain. Residues histidine 580 and histidine 603 each contribute to the heme site. Positions 660–772 (REKIPVRLIE…KGPLGHIEYK (113 aa)) constitute an FAD-binding FR-type domain. FAD contacts are provided by residues 712–715 (RAYT), 729–733 (VVKVY), phenylalanine 734, phenylalanine 741, 746–748 (LMS), and threonine 799.

It belongs to the nitrate reductase family. In terms of assembly, homodimer. FAD is required as a cofactor. It depends on heme as a cofactor. Requires Mo-molybdopterin as cofactor. As to expression, root, leaf, and shoot.

It catalyses the reaction nitrite + NAD(+) + H2O = nitrate + NADH + H(+). Nitrate reductase is a key enzyme involved in the first step of nitrate assimilation in plants, fungi and bacteria. In Arabidopsis thaliana (Mouse-ear cress), this protein is Nitrate reductase [NADH] 1 (NIA1).